Consider the following 314-residue polypeptide: Protoheme IX farnesyltransferase (314 aa).

A run of 8 helical transmembrane segments spans residues 30-50, 51-71, 122-142, 151-171, 178-198, 224-244, 247-267, and 285-305; these read VMSL…VSVH, PVIG…SGAL, FLAA…YSMW, IVIG…IATG, WLMF…LALF, IIAY…SAIG, VYLA…IDIW, and FFRL…LESA.

This sequence belongs to the UbiA prenyltransferase family. Protoheme IX farnesyltransferase subfamily. In terms of assembly, interacts with CtaA.

Its subcellular location is the cell inner membrane. It carries out the reaction heme b + (2E,6E)-farnesyl diphosphate + H2O = Fe(II)-heme o + diphosphate. It functions in the pathway porphyrin-containing compound metabolism; heme O biosynthesis; heme O from protoheme: step 1/1. Converts heme B (protoheme IX) to heme O by substitution of the vinyl group on carbon 2 of heme B porphyrin ring with a hydroxyethyl farnesyl side group. The chain is Protoheme IX farnesyltransferase from Roseobacter denitrificans (strain ATCC 33942 / OCh 114) (Erythrobacter sp. (strain OCh 114)).